A 213-amino-acid chain; its full sequence is Achelase-1 (213 aa).

In terms of domain architecture, Peptidase S1 spans 1 to 213 (IVGGSVTTIG…RYTSWIQSNA (213 aa)). Residues C26 and C42 are joined by a disulfide bond. Active-site charge relay system residues include H41 and D86. C155 and C172 are oxidised to a cystine. Residue S188 is the Charge relay system of the active site.

It belongs to the peptidase S1 family. Hemolymph and saliva of the larval form (caterpillar).

It is found in the secreted. It localises to the extracellular space. Its activity is regulated as follows. Sensitive to serine proteinase inhibitors and thiol proteinase inhibitors. Fibrinolytic activity; shows preferential cleavage of Arg-Gly bonds in all three fibrinogen chains. Contact with the caterpillars causes severe bleeding, due the anticoagulant effect of the protein. The polypeptide is Achelase-1 (Lonomia achelous (Giant silkworm moth)).